The following is a 594-amino-acid chain: Lysine--tRNA ligase cla4 (594 aa).

A disordered region spans residues 1 to 62 (MADPGAVKET…KETSSEQDEA (62 aa)). The span at 18-42 (TGEKVSKTELKKRLKSRAKEAEKQK) shows a compositional bias: basic and acidic residues.

This sequence belongs to the class-II aminoacyl-tRNA synthetase family. As to quaternary structure, homodimer.

It carries out the reaction tRNA(Lys) + L-lysine + ATP = L-lysyl-tRNA(Lys) + AMP + diphosphate. Functionally, involved in self-resistance to cladosporin since this product is an inhibitor of lysyl-tRNA synthetase. Cla4 may not be inhibited by cladosporin, thereby imparting cladosporin resistance. When cladosporin biosynthesis is switched on, transcription of cla4 will then be necessary for continued protein synthesis in C.cladosporioides. This chain is Lysine--tRNA ligase cla4, found in Cladosporium cladosporioides.